The sequence spans 785 residues: Cation/H(+) antiporter 1 (785 aa).

12 helical membrane passes run 19 to 39 (LNTMFIQMACILVFSQFFYLF), 44 to 64 (GQAGPVAQILAGIVLSLLTII), 79 to 99 (YYIFFSFLLRTAFVFLIGLEI), 112 to 132 (IVITLGSLVISGIIWLPFLWF), 143 to 163 (FLTFYLAFLITLSNTAAPVVI), 179 to 199 (LAISCGLFIEITNIFIYTIVL), 201 to 221 (FISGTMTADIFIYSFATGVII), 240 to 260 (YLSKAETLAFIILILIIALTI), 294 to 314 (YPIHEFVLPVYFGYIGFRFSV), 323 to 343 (LVLGMTVALSLLGKLLGVLFA), 352 to 372 (QYWLFLSTMLSVKGHIGLVLL), and 389 to 409 (MFVAALVIMTLLSGVITSLLL).

This sequence belongs to the monovalent cation:proton antiporter 2 (CPA2) transporter (TC 2.A.37) family. CHX (TC 2.A.37.4) subfamily. In terms of tissue distribution, specifically expressed in pollen.

It localises to the membrane. Functionally, may operate as a cation/H(+) antiporter. In Arabidopsis thaliana (Mouse-ear cress), this protein is Cation/H(+) antiporter 1 (CHX1).